A 48-amino-acid chain; its full sequence is Light-harvesting protein B-870 beta chain (48 aa).

The Cytoplasmic segment spans residues 2–21 (AERKGSISGLTDDEAQEFHK). 2 residues coordinate a bacteriochlorophyll: His-20 and His-38. A helical membrane pass occupies residues 22-44 (FWVQGFVGFTAVAVVAHFLVWVW). At 45-48 (RPWL) the chain is on the periplasmic side.

An alpha/beta heterodimer. The core complex is formed by different alpha and beta chains, binding bacteriochlorophyll molecules, and arranged most probably in tetrameric structures disposed around the reaction center. The non-pigmented gamma chains may constitute additional components.

Its subcellular location is the cell inner membrane. Antenna complexes are light-harvesting systems, which transfer the excitation energy to the reaction centers. This chain is Light-harvesting protein B-870 beta chain (pufB), found in Rubrivivax gelatinosus (Rhodocyclus gelatinosus).